Reading from the N-terminus, the 554-residue chain is 3-(3-hydroxy-phenyl)propionate/3-hydroxycinnamic acid hydroxylase (554 aa).

FAD-binding positions include Gln17–Lys46 and Phe285–Asp295.

This sequence belongs to the PheA/TfdB FAD monooxygenase family. The cofactor is FAD.

The catalysed reaction is 3-(3-hydroxyphenyl)propanoate + NADH + O2 + H(+) = 3-(2,3-dihydroxyphenyl)propanoate + NAD(+) + H2O. It catalyses the reaction (2E)-3-(3-hydroxyphenyl)prop-2-enoate + NADH + O2 + H(+) = (2E)-3-(2,3-dihydroxyphenyl)prop-2-enoate + NAD(+) + H2O. It participates in aromatic compound metabolism; 3-phenylpropanoate degradation. Catalyzes the insertion of one atom of molecular oxygen into position 2 of the phenyl ring of 3-(3-hydroxyphenyl)propionate (3-HPP) and hydroxycinnamic acid (3HCI). The chain is 3-(3-hydroxy-phenyl)propionate/3-hydroxycinnamic acid hydroxylase from Escherichia coli O139:H28 (strain E24377A / ETEC).